The sequence spans 251 residues: Octanoyltransferase (251 aa).

In terms of domain architecture, BPL/LPL catalytic spans 49–230 (DEIADQILVL…DLDDAFAGRL (182 aa)). Residues 87 to 94 (RGGRITWH), 160 to 162 (ALG), and 173 to 175 (GLA) each bind substrate. Cys191 (acyl-thioester intermediate) is an active-site residue.

This sequence belongs to the LipB family.

Its subcellular location is the cytoplasm. It carries out the reaction octanoyl-[ACP] + L-lysyl-[protein] = N(6)-octanoyl-L-lysyl-[protein] + holo-[ACP] + H(+). Its pathway is protein modification; protein lipoylation via endogenous pathway; protein N(6)-(lipoyl)lysine from octanoyl-[acyl-carrier-protein]: step 1/2. In terms of biological role, catalyzes the transfer of endogenously produced octanoic acid from octanoyl-acyl-carrier-protein onto the lipoyl domains of lipoate-dependent enzymes. Lipoyl-ACP can also act as a substrate although octanoyl-ACP is likely to be the physiological substrate. The chain is Octanoyltransferase from Corynebacterium efficiens (strain DSM 44549 / YS-314 / AJ 12310 / JCM 11189 / NBRC 100395).